A 371-amino-acid polypeptide reads, in one-letter code: Pyruvate dehydrogenase E1 component subunit alpha (371 aa).

In terms of assembly, heterodimer of an alpha and a beta chain. Thiamine diphosphate serves as cofactor.

It carries out the reaction N(6)-[(R)-lipoyl]-L-lysyl-[protein] + pyruvate + H(+) = N(6)-[(R)-S(8)-acetyldihydrolipoyl]-L-lysyl-[protein] + CO2. Its function is as follows. The pyruvate dehydrogenase complex catalyzes the overall conversion of pyruvate to acetyl-CoA and CO(2). It contains multiple copies of three enzymatic components: pyruvate dehydrogenase (E1), dihydrolipoamide acetyltransferase (E2) and lipoamide dehydrogenase (E3). The polypeptide is Pyruvate dehydrogenase E1 component subunit alpha (Bacillus cereus).